We begin with the raw amino-acid sequence, 122 residues long: Large ribosomal subunit protein bL12 (122 aa).

Belongs to the bacterial ribosomal protein bL12 family. Homodimer. Part of the ribosomal stalk of the 50S ribosomal subunit. Forms a multimeric L10(L12)X complex, where L10 forms an elongated spine to which 2 to 4 L12 dimers bind in a sequential fashion. Binds GTP-bound translation factors.

Its function is as follows. Forms part of the ribosomal stalk which helps the ribosome interact with GTP-bound translation factors. Is thus essential for accurate translation. This chain is Large ribosomal subunit protein bL12, found in Stutzerimonas stutzeri (strain A1501) (Pseudomonas stutzeri).